Reading from the N-terminus, the 131-residue chain is Glycine cleavage system H protein (131 aa).

Residues 24–106 (RVTVGISDHA…YGEGWIFVVE (83 aa)) enclose the Lipoyl-binding domain. K65 is modified (N6-lipoyllysine).

The protein belongs to the GcvH family. The glycine cleavage system is composed of four proteins: P, T, L and H. Requires (R)-lipoate as cofactor.

In terms of biological role, the glycine cleavage system catalyzes the degradation of glycine. The H protein shuttles the methylamine group of glycine from the P protein to the T protein. This Xanthomonas campestris pv. campestris (strain 8004) protein is Glycine cleavage system H protein.